The sequence spans 349 residues: MAASSTFFSPSLFLCVLVLIDITLAVSLDTDMKLKSENNNHLQNQETWPQQPRSGHHHKHGLAKKGRVLALPVRGQPAGEEALRVGSGAPAMEELVPLGQPAALKQDKDKDVFLGFELPHAERENQSPGSERGKKQNREQRRHSRRDRLKHHRGKTAVGPSSLYKKPESFEQQFQNLQAEEATSPTPTVLPFTALDLVVSTEEPPVLPATSPRSQARLRQDGDVMPTLDMALFDWTDYEDLKPEMWPSAKKKEKRRSKSSNGGNETSSAEGEPCDHHLDCLPGSCCDLREHLCKPHNRGLNNKCYDDCMCTEGLRCYAKFHRNRRVTRRKGRCVEPESANGEQGSFINV.

Positions 1–25 (MAASSTFFSPSLFLCVLVLIDITLA) are cleaved as a signal peptide. A compositionally biased stretch (polar residues) spans 40–53 (NHLQNQETWPQQPR). 3 disordered regions span residues 40-63 (NHLQ…HGLA), 119-166 (PHAE…LYKK), and 246-273 (WPSA…EGEP). Basic residues predominate over residues 54–63 (SGHHHKHGLA). Residues 119–139 (PHAERENQSPGSERGKKQNRE) are compositionally biased toward basic and acidic residues. Basic residues-rich tracts occupy residues 140-155 (QRRH…HRGK) and 249-258 (AKKKEKRRSK). Residue N264 is glycosylated (N-linked (GlcNAc...) asparagine).

The protein belongs to the draxin family.

The protein resides in the secreted. Chemorepulsive axon guidance protein required for the development of spinal cord and forebrain commissures. Acts as a chemorepulsive guidance protein for commissural axons during development. Able to inhibit or repel neurite outgrowth from dorsal spinal cord and cortical explants in vitro. Binds directly to the neurites and growth cones. This Gallus gallus (Chicken) protein is Draxin.